Reading from the N-terminus, the 138-residue chain is Small ribosomal subunit protein uS12 (138 aa).

The tract at residues 1 to 20 is disordered; it reads MPTISQLINHGRSAKTSKSK. Asp-102 carries the post-translational modification 3-methylthioaspartic acid. Residues 116–138 are disordered; that stretch reads DAAGVDKRKQGRSIYGTKKPKEN.

It belongs to the universal ribosomal protein uS12 family. In terms of assembly, part of the 30S ribosomal subunit. Contacts proteins S8 and S17. May interact with IF1 in the 30S initiation complex.

With S4 and S5 plays an important role in translational accuracy. Functionally, interacts with and stabilizes bases of the 16S rRNA that are involved in tRNA selection in the A site and with the mRNA backbone. Located at the interface of the 30S and 50S subunits, it traverses the body of the 30S subunit contacting proteins on the other side and probably holding the rRNA structure together. The combined cluster of proteins S8, S12 and S17 appears to hold together the shoulder and platform of the 30S subunit. The sequence is that of Small ribosomal subunit protein uS12 from Metamycoplasma arthritidis (strain 158L3-1) (Mycoplasma arthritidis).